The following is a 212-amino-acid chain: Glycerol-3-phosphate acyltransferase (212 aa).

The next 5 helical transmembrane spans lie at 3-23, 51-71, 78-98, 115-135, and 139-159; these read ILLAALVAYLIGSVSFAVIVS, KAAILTLVGDAFKGWLAVWLA, DVAVAWVAIAVFVGHLYPVFF, AVHPVLGLATALTWLIVAFFF, and SLAALVAAVFAPVFDVFLFGT.

Belongs to the PlsY family. As to quaternary structure, probably interacts with PlsX.

The protein resides in the cell inner membrane. The catalysed reaction is an acyl phosphate + sn-glycerol 3-phosphate = a 1-acyl-sn-glycero-3-phosphate + phosphate. It functions in the pathway lipid metabolism; phospholipid metabolism. In terms of biological role, catalyzes the transfer of an acyl group from acyl-phosphate (acyl-PO(4)) to glycerol-3-phosphate (G3P) to form lysophosphatidic acid (LPA). This enzyme utilizes acyl-phosphate as fatty acyl donor, but not acyl-CoA or acyl-ACP. This chain is Glycerol-3-phosphate acyltransferase, found in Burkholderia vietnamiensis (strain G4 / LMG 22486) (Burkholderia cepacia (strain R1808)).